A 147-amino-acid chain; its full sequence is Lysozyme C (147 aa).

Positions 1–18 are cleaved as a signal peptide; the sequence is MKALVILGFLFLSVAVQG. Positions 19–147 constitute a C-type lysozyme domain; it reads KVFERCELAR…VSSYVEGCTL (129 aa). Intrachain disulfides connect Cys-24-Cys-145, Cys-48-Cys-133, Cys-83-Cys-99, and Cys-95-Cys-113. Residues Glu-53 and Asp-71 contribute to the active site.

The protein belongs to the glycosyl hydrolase 22 family. As to quaternary structure, monomer. As to expression, stomach-specific.

The enzyme catalyses Hydrolysis of (1-&gt;4)-beta-linkages between N-acetylmuramic acid and N-acetyl-D-glucosamine residues in a peptidoglycan and between N-acetyl-D-glucosamine residues in chitodextrins.. Lysozymes have primarily a bacteriolytic function; those in tissues and body fluids are associated with the monocyte-macrophage system and enhance the activity of immunoagents. In Bos taurus (Bovine), this protein is Lysozyme C (LYZ1).